The sequence spans 800 residues: Elongation factor G, mitochondrial (800 aa).

The transit peptide at 1 to 34 (MSVHTVMRTQVRSLAGMPKAAMRPLGNSFCARRY) directs the protein to the mitochondrion. One can recognise a tr-type G domain in the interval 99–385 (SKVRNIGIAA…GICDYLPNPA (287 aa)). Residues 108-115 (AHIDSGKT), 183-187 (DTPGH), and 237-240 (NKMD) each bind GTP.

The protein belongs to the TRAFAC class translation factor GTPase superfamily. Classic translation factor GTPase family. EF-G/EF-2 subfamily.

Its subcellular location is the mitochondrion. The protein operates within protein biosynthesis; polypeptide chain elongation. Mitochondrial GTPase that catalyzes the GTP-dependent ribosomal translocation step during translation elongation. During this step, the ribosome changes from the pre-translocational (PRE) to the post-translocational (POST) state as the newly formed A-site-bound peptidyl-tRNA and P-site-bound deacylated tRNA move to the P and E sites, respectively. Catalyzes the coordinated movement of the two tRNA molecules, the mRNA and conformational changes in the ribosome. The sequence is that of Elongation factor G, mitochondrial from Coccidioides immitis (strain RS) (Valley fever fungus).